Reading from the N-terminus, the 239-residue chain is ATP-dependent dethiobiotin synthetase BioD (239 aa).

15-20 contacts ATP; it reads EIGKTF. Thr-19 is a binding site for Mg(2+). The active site involves Lys-40. Residues Asp-57, 118-121, 178-179, and 211-213 contribute to the ATP site; these read EGVG, NH, and AHL. Mg(2+) is bound by residues Asp-57 and Glu-118.

Belongs to the dethiobiotin synthetase family. As to quaternary structure, homodimer. Requires Mg(2+) as cofactor.

It localises to the cytoplasm. It catalyses the reaction (7R,8S)-7,8-diammoniononanoate + CO2 + ATP = (4R,5S)-dethiobiotin + ADP + phosphate + 3 H(+). Its pathway is cofactor biosynthesis; biotin biosynthesis; biotin from 7,8-diaminononanoate: step 1/2. Its function is as follows. Catalyzes a mechanistically unusual reaction, the ATP-dependent insertion of CO2 between the N7 and N8 nitrogen atoms of 7,8-diaminopelargonic acid (DAPA, also called 7,8-diammoniononanoate) to form a ureido ring. This is ATP-dependent dethiobiotin synthetase BioD from Burkholderia ambifaria (strain MC40-6).